Consider the following 310-residue polypeptide: Spermatid maturation protein 1 (310 aa).

Residues 29-49 (ILLLLGLIVCINIGINLVTLL) form a helical membrane-spanning segment. The segment at 215 to 238 (ALSHKNNAAGSGGCVEGEQAQGQP) is disordered. Positions 262-286 (VYDARDVRRRLRELTQEVEALSHCY) form a coiled coil.

As to expression, testis-specific. Exclusively present in cytoplasm of steps 14-16 elongated spermatids (at protein level).

It localises to the membrane. The protein resides in the cytoplasm. Required for proper cytoplasm removal during spermatogenesis. The polypeptide is Spermatid maturation protein 1 (Spem1) (Mus musculus (Mouse)).